The following is a 186-amino-acid chain: UPF0301 protein CV_3909 (186 aa).

This sequence belongs to the UPF0301 (AlgH) family.

In Chromobacterium violaceum (strain ATCC 12472 / DSM 30191 / JCM 1249 / CCUG 213 / NBRC 12614 / NCIMB 9131 / NCTC 9757 / MK), this protein is UPF0301 protein CV_3909.